A 93-amino-acid polypeptide reads, in one-letter code: DNA-binding protein HU 1 (93 aa).

The protein belongs to the bacterial histone-like protein family. As to quaternary structure, homodimer.

Its subcellular location is the cytoplasm. The protein resides in the nucleoid. Histone-like DNA-binding protein which is capable of wrapping DNA to stabilize it, and thus to prevent its denaturation under extreme environmental conditions. This chain is DNA-binding protein HU 1 (hup1), found in Streptomyces coelicolor (strain ATCC BAA-471 / A3(2) / M145).